A 602-amino-acid chain; its full sequence is Elongation factor 4 (602 aa).

The tr-type G domain maps to 7–189 (RKIRNFSIIA…AIVKNIPPPT (183 aa)). GTP is bound by residues 19–24 (DHGKST) and 136–139 (NKID).

This sequence belongs to the TRAFAC class translation factor GTPase superfamily. Classic translation factor GTPase family. LepA subfamily.

The protein localises to the cell membrane. It carries out the reaction GTP + H2O = GDP + phosphate + H(+). Functionally, required for accurate and efficient protein synthesis under certain stress conditions. May act as a fidelity factor of the translation reaction, by catalyzing a one-codon backward translocation of tRNAs on improperly translocated ribosomes. Back-translocation proceeds from a post-translocation (POST) complex to a pre-translocation (PRE) complex, thus giving elongation factor G a second chance to translocate the tRNAs correctly. Binds to ribosomes in a GTP-dependent manner. The polypeptide is Elongation factor 4 (Alkaliphilus metalliredigens (strain QYMF)).